Here is a 132-residue protein sequence, read N- to C-terminus: Ribosome-binding factor A (132 aa).

This sequence belongs to the RbfA family. As to quaternary structure, monomer. Binds 30S ribosomal subunits, but not 50S ribosomal subunits or 70S ribosomes.

The protein resides in the cytoplasm. Functionally, one of several proteins that assist in the late maturation steps of the functional core of the 30S ribosomal subunit. Associates with free 30S ribosomal subunits (but not with 30S subunits that are part of 70S ribosomes or polysomes). Required for efficient processing of 16S rRNA. May interact with the 5'-terminal helix region of 16S rRNA. This Pectobacterium atrosepticum (strain SCRI 1043 / ATCC BAA-672) (Erwinia carotovora subsp. atroseptica) protein is Ribosome-binding factor A.